The primary structure comprises 301 residues: uncharacterized protein (301 aa).

The 58-residue stretch at 1–58 folds into the HTH lysR-type domain; the sequence is MDIRHLTYFLEVARLKSFTKASQSLYVSQPTISKMIKNLEEELGIELFYRNGRQVELT. The H-T-H motif DNA-binding region spans 18-37; sequence FTKASQSLYVSQPTISKMIK.

Belongs to the LysR transcriptional regulatory family.

This is an uncharacterized protein from Bacillus subtilis (strain 168).